The primary structure comprises 450 residues: Sensor histidine kinase EnvZ (450 aa).

The Cytoplasmic segment spans residues M1–T15. Residues L16–L35 form a helical membrane-spanning segment. At N36–S158 the chain is on the periplasmic side. Residues V71–A75 carry the polyP-periplasmic motif motif. A helical membrane pass occupies residues P159–I179. Residues R180–D232 form the HAMP domain. At R180 to G450 the chain is on the cytoplasmic side. The polyP-cytoplasmic motif motif lies at I201–L205. Residues M223–R289 form a cytoplasmic dimerization domain (CDD), when dimerized forms osmosensitive core region. The 201-residue stretch at G240 to V440 folds into the Histidine kinase domain. Residues H243, N347–Y351, D373, R392–G393, and T402–L406 contribute to the ATP site. H243 is modified (phosphohistidine; by autocatalysis).

In terms of assembly, homodimer. Interacts with MzrA. Autophosphorylated. Incubation of isolated EnvZ C-terminal fragment (residues 180-450) with increasing levels of NaCl or sucrose increases its autophosphorylation.

The protein resides in the cell inner membrane. It carries out the reaction ATP + protein L-histidine = ADP + protein N-phospho-L-histidine.. Activity is modulated by MzrA. In the presence of 0.2 M NaCl, 2.0 mM sodium cholate (bile salts) decreases expression from the ompC promoter; how this is mediated is unknown. Autophosphorylation is inhibited by the angucycline antibiotic waldiomycin in a non-competitive manner; waldiomycin prevents dimerization of the cytoplasmic domain and autophosphorylation. Member of the two-component regulatory system EnvZ/OmpR involved in osmoregulation (particularly of genes ompF and ompC) as well as other genes. EnvZ functions as a membrane-associated protein kinase that phosphorylates OmpR in response to environmental signals; at low osmolarity OmpR activates ompF transcription, while at high osmolarity it represses ompF and activates ompC transcription. Also dephosphorylates OmpR in the presence of ATP. The cytoplasmic dimerization domain (CDD) forms an osmosensitive core; increasing osmolarity stabilizes this segment (possibly by its contraction), enhancing the autophosphorylation rate and consequently, downstream phosphotransfer to OmpR and signaling. Autophosphorylation is greater when full-length EnvZ is reconstituted in a lipid environment, lipid-mediated allostery impacts the kinase function of EnvZ. Involved in acid stress response; this requires EnvZ but not OmpR phosphorylation, and suggests that EnvZ senses cytoplasmic acidic pH. The sequence is that of Sensor histidine kinase EnvZ (envZ) from Escherichia coli (strain K12).